A 471-amino-acid chain; its full sequence is N(6)-adenine-specific methyltransferase METTL4 (471 aa).

Belongs to the MT-A70-like family.

The protein resides in the nucleus. It catalyses the reaction a 2'-O-methyladenosine in U2 snRNA + S-adenosyl-L-methionine = an N(6)-methyl-2'-O-methyladenosine in U2 snRNA + S-adenosyl-L-homocysteine + H(+). It carries out the reaction a 2'-deoxyadenosine in DNA + S-adenosyl-L-methionine = an N(6)-methyl-2'-deoxyadenosine in DNA + S-adenosyl-L-homocysteine + H(+). Its function is as follows. N(6)-adenine-specific methyltransferase that can methylate both RNAs and DNA. Acts as a N(6)-adenine-specific RNA methyltransferase by catalyzing formation of N6,2'-O-dimethyladenosine (m6A(m)) on internal positions of U2 small nuclear RNA (snRNA): methylates the 6th position of adenine residues with a pre-deposited 2'-O-methylation. Internal m6A(m) methylation of snRNAs regulates RNA splicing. Also able to act as a N(6)-adenine-specific DNA methyltransferase by mediating methylation of DNA on the 6th position of adenine (N(6)-methyladenosine). The existence of N(6)-methyladenosine (m6A) on DNA is however unclear in mammals, and additional evidences are required to confirm the role of the N(6)-adenine-specific DNA methyltransferase activity of METTL4 in vivo. Acts as a regulator of mitochondrial transcript levels and mitochondrial DNA (mtDNA) copy number by mediating mtDNA N(6)-methylation: m6A on mtDNA reduces transcription by repressing TFAM DNA-binding and bending. N(6)-methyladenosine deposition by METTL4 regulates Polycomb silencing by triggering ubiquitination and degradation of sensor proteins ASXL1 and MPND, leading to inactivation of the PR-DUB complex and subsequent preservation of Polycomb silencing. The chain is N(6)-adenine-specific methyltransferase METTL4 from Mus musculus (Mouse).